The sequence spans 223 residues: Retbindin (223 aa).

The first 30 residues, Met1 to Gly30, serve as a signal peptide directing secretion. 4 disulfide bridges follow: Cys73–Cys143, Cys80–Cys120, Cys113–Cys157, and Cys126–Cys139.

Belongs to the folate receptor family. Post-translationally, not N-glycosylated.

The protein resides in the secreted. It localises to the extracellular space. It is found in the extracellular matrix. The protein localises to the interphotoreceptor matrix. Its subcellular location is the cell membrane. Riboflavin-binding protein which might have a role in retinal flavin transport. In Canis lupus familiaris (Dog), this protein is Retbindin (RTBDN).